A 406-amino-acid chain; its full sequence is Tryptophan synthase beta chain (406 aa).

K97 is modified (N6-(pyridoxal phosphate)lysine).

The protein belongs to the TrpB family. Tetramer of two alpha and two beta chains. The cofactor is pyridoxal 5'-phosphate.

It carries out the reaction (1S,2R)-1-C-(indol-3-yl)glycerol 3-phosphate + L-serine = D-glyceraldehyde 3-phosphate + L-tryptophan + H2O. Its pathway is amino-acid biosynthesis; L-tryptophan biosynthesis; L-tryptophan from chorismate: step 5/5. Its function is as follows. The beta subunit is responsible for the synthesis of L-tryptophan from indole and L-serine. This Lacticaseibacillus casei (strain BL23) (Lactobacillus casei) protein is Tryptophan synthase beta chain.